Consider the following 263-residue polypeptide: Indole-3-glycerol phosphate synthase (263 aa).

This sequence belongs to the TrpC family.

It carries out the reaction 1-(2-carboxyphenylamino)-1-deoxy-D-ribulose 5-phosphate + H(+) = (1S,2R)-1-C-(indol-3-yl)glycerol 3-phosphate + CO2 + H2O. The protein operates within amino-acid biosynthesis; L-tryptophan biosynthesis; L-tryptophan from chorismate: step 4/5. This Polaromonas naphthalenivorans (strain CJ2) protein is Indole-3-glycerol phosphate synthase.